The sequence spans 126 residues: Chorion class B protein M1768 (126 aa).

Positions Tyr1–Phe17 are left arm. The segment at Ser18–Glu86 is central domain. The right arm (Gly-rich tandem repeats) stretch occupies residues Gly87–Tyr126.

This sequence belongs to the chorion protein family.

This protein is one of many from the eggshell of the silk moth. The sequence is that of Chorion class B protein M1768 from Bombyx mori (Silk moth).